Here is a 444-residue protein sequence, read N- to C-terminus: Methylenetetrahydrofolate--tRNA-(uracil-5-)-methyltransferase TrmFO (444 aa).

Residue 10–15 (GAGLAG) coordinates FAD.

Belongs to the MnmG family. TrmFO subfamily. FAD serves as cofactor.

Its subcellular location is the cytoplasm. It carries out the reaction uridine(54) in tRNA + (6R)-5,10-methylene-5,6,7,8-tetrahydrofolate + NADH + H(+) = 5-methyluridine(54) in tRNA + (6S)-5,6,7,8-tetrahydrofolate + NAD(+). The enzyme catalyses uridine(54) in tRNA + (6R)-5,10-methylene-5,6,7,8-tetrahydrofolate + NADPH + H(+) = 5-methyluridine(54) in tRNA + (6S)-5,6,7,8-tetrahydrofolate + NADP(+). Its function is as follows. Catalyzes the folate-dependent formation of 5-methyl-uridine at position 54 (M-5-U54) in all tRNAs. This is Methylenetetrahydrofolate--tRNA-(uracil-5-)-methyltransferase TrmFO from Streptococcus gordonii (strain Challis / ATCC 35105 / BCRC 15272 / CH1 / DL1 / V288).